A 65-amino-acid chain; its full sequence is MPKMKTHRGAAKRFKKTGTGKIVRHHAFTSHILEKKSPKRKRNLRKGTVMHKTDAKRIARLVAYL.

This sequence belongs to the bacterial ribosomal protein bL35 family.

This Desulfitobacterium hafniense (strain DSM 10664 / DCB-2) protein is Large ribosomal subunit protein bL35.